A 66-amino-acid polypeptide reads, in one-letter code: uncharacterized protein (66 aa).

Residues 1–21 (MPGGDRTGPWGQGPRTGRRAG) are disordered.

This is an uncharacterized protein from Archaeoglobus fulgidus (strain ATCC 49558 / DSM 4304 / JCM 9628 / NBRC 100126 / VC-16).